Consider the following 330-residue polypeptide: MTMRSSSPSSSSSYSLAFTSLSNRLETIFKKASELCTLCDIEACVIYYGPDGELKTWPKEKEKVRDIALRYSLLNEALRRKKSVNLHGFLNKKKNKGLKNPNKKMKTSLKNVNILKYPLADHYPPDQVSPLIQSLELHVSKFQERLRFLESQKQNQTKPDHQSLTPSSLNHYTQSLNPSQFSLFMYNHGDNTLSQIPVSASNFNQDYFSALLEESELKNQLMKPEICGYDQNQNMSMGDITNNKFQDPCVSNKEAVQESVNNFGLNQLMYKEFYGCDQNMSMGNINSNSFQNPCVSNTQHYSAVEESVKNPWLNQLMQNELYGYGYAGFC.

An MADS-box domain is found at 19–61; it reads TSLSNRLETIFKKASELCTLCDIEACVIYYGPDGELKTWPKEK.

Interacts with MEE14/CBP1.

The protein localises to the nucleus. In terms of biological role, probable transcription factor that may function in the maintenance of the proper function of the central cell in pollen tube attraction. The sequence is that of Agamous-like MADS-box protein AGL75 from Arabidopsis thaliana (Mouse-ear cress).